Here is a 312-residue protein sequence, read N- to C-terminus: Very-long-chain 3-oxoacyl-CoA reductase (312 aa).

Residues 4–24 (ALPAAGFLYWVGASTIAYLTL) form a helical membrane-spanning segment. 50-79 (GEWAVVTGGTDGIGKSYAEELAKRGMKIVL) is an NADP(+) binding site. Transmembrane regions (helical) follow at residues 182 to 202 (GVILNISSASGMLPVPLLTVY) and 271 to 291 (GYVIHAIMGSINSILPRWIYF). Ser189 is a substrate binding site. Tyr202 functions as the Proton acceptor in the catalytic mechanism. A Di-lysine motif motif is present at residues 308–312 (KTKKN).

The protein belongs to the short-chain dehydrogenases/reductases (SDR) family. 17-beta-HSD 3 subfamily.

Its subcellular location is the endoplasmic reticulum membrane. It carries out the reaction a very-long-chain (3R)-3-hydroxyacyl-CoA + NADP(+) = a very-long-chain 3-oxoacyl-CoA + NADPH + H(+). The enzyme catalyses 17beta-estradiol + NAD(+) = estrone + NADH + H(+). The catalysed reaction is 17beta-estradiol + NADP(+) = estrone + NADPH + H(+). It catalyses the reaction 3-oxooctadecanoyl-CoA + NADPH + H(+) = (3R)-hydroxyoctadecanoyl-CoA + NADP(+). It carries out the reaction (7Z,10Z,13Z,16Z)-3-oxodocosatetraenoyl-CoA + NADPH + H(+) = (3R)-hydroxy-(7Z,10Z,13Z,16Z)-docosatetraenoyl-CoA + NADP(+). The enzyme catalyses 3-oxo-(7Z,10Z,13Z,16Z,19Z)-docosapentaenoyl-CoA + NADPH + H(+) = (3R)-hydroxy-(7Z,10Z,13Z,16Z,19Z)-docosapentaenoyl-CoA + NADP(+). The catalysed reaction is (8Z,11Z,14Z)-3-oxoeicosatrienoyl-CoA + NADPH + H(+) = (3R)-hydroxy-(8Z,11Z,14Z)-eicosatrienoyl-CoA + NADP(+). It participates in lipid metabolism; fatty acid biosynthesis. It functions in the pathway steroid biosynthesis; estrogen biosynthesis. Catalyzes the second of the four reactions of the long-chain fatty acids elongation cycle. This endoplasmic reticulum-bound enzymatic process, allows the addition of two carbons to the chain of long- and very long-chain fatty acids/VLCFAs per cycle. This enzyme has a 3-ketoacyl-CoA reductase activity, reducing 3-ketoacyl-CoA to 3-hydroxyacyl-CoA, within each cycle of fatty acid elongation. Thereby, it may participate in the production of VLCFAs of different chain lengths that are involved in multiple biological processes as precursors of membrane lipids and lipid mediators. May also catalyze the transformation of estrone (E1) into estradiol (E2) and play a role in estrogen formation. The polypeptide is Very-long-chain 3-oxoacyl-CoA reductase (Rattus norvegicus (Rat)).